Consider the following 370-residue polypeptide: tRNA-specific 2-thiouridylase MnmA (370 aa).

Residues 9 to 16 (GMSGGVDS) and methionine 35 each bind ATP. The segment at 95–97 (NPD) is interaction with target base in tRNA. The Nucleophile role is filled by cysteine 100. The cysteines at positions 100 and 196 are disulfide-linked. Glycine 124 serves as a coordination point for ATP. Positions 146-148 (KDQ) are interaction with tRNA. Residue cysteine 196 is the Cysteine persulfide intermediate of the active site. The interval 308-309 (RY) is interaction with tRNA.

Belongs to the MnmA/TRMU family.

It is found in the cytoplasm. The catalysed reaction is S-sulfanyl-L-cysteinyl-[protein] + uridine(34) in tRNA + AH2 + ATP = 2-thiouridine(34) in tRNA + L-cysteinyl-[protein] + A + AMP + diphosphate + H(+). Its function is as follows. Catalyzes the 2-thiolation of uridine at the wobble position (U34) of tRNA, leading to the formation of s(2)U34. The polypeptide is tRNA-specific 2-thiouridylase MnmA (Ralstonia nicotianae (strain ATCC BAA-1114 / GMI1000) (Ralstonia solanacearum)).